The following is a 529-amino-acid chain: Scarecrow-like protein 13 (529 aa).

Residues 51-81 (ASGSLPSYDSPSVSITSGRSPFSPQGSQSCI) are compositionally biased toward polar residues. The disordered stretch occupies residues 51–84 (ASGSLPSYDSPSVSITSGRSPFSPQGSQSCISDL). The GRAS domain maps to 146–525 (LLALTPQLDL…RPMATCSVWK (380 aa)). A leucine repeat I (LRI) region spans residues 153–213 (LDLKEVLVEA…RARLEGSGSN (61 aa)). The tract at residues 232–297 (MSVLYEICPY…GGPPLLRVTG (66 aa)) is VHIID. Positions 263 to 267 (VHIID) match the VHIID motif. Residues 313-345 (LVGERLATLAQSCGVPFEFHDAIMSGCKVQREH) form a leucine repeat II (LRII) region. The interval 354–448 (VVVNFPYVLH…QHCVARDIVN (95 aa)) is PFYRE. Positions 451 to 525 (ACEESERVER…RPMATCSVWK (75 aa)) are SAW.

This sequence belongs to the GRAS family. Expressed in roots, hypocotyls, cotyledons, shoot apex, leaves, flowers and siliques.

It localises to the cytoplasm. It is found in the nucleus. Probable transcription factor that acts as a positive regulator of continuous red light signals downstream of phytochrome B (phyB). Required for the regulation of hypocotyl elongation during de-etiolation. May be required to modulate phytochrome A (phyA) signal transduction in a phyB-independent way. This is Scarecrow-like protein 13 (SCL13) from Arabidopsis thaliana (Mouse-ear cress).